The chain runs to 290 residues: Cilia- and flagella-associated protein 298 (290 aa).

Belongs to the CFAP298 family. As to quaternary structure, interacts with ZMYND10. In terms of tissue distribution, expressed in the trachea (at protein level).

It is found in the cytoplasm. The protein resides in the cytoskeleton. Its subcellular location is the cilium basal body. Plays a role in motile cilium function, possibly by acting on outer dynein arm assembly. Seems to be important for initiation rather than maintenance of cilium motility. Required for correct positioning of cilia at the apical cell surface, suggesting an additional role in the planar cell polarity (PCP) pathway. May suppress canonical Wnt signaling activity. This is Cilia- and flagella-associated protein 298 from Rattus norvegicus (Rat).